We begin with the raw amino-acid sequence, 380 residues long: N5-carboxyaminoimidazole ribonucleotide synthase (380 aa).

ATP is bound by residues arginine 108, lysine 148, 153 to 159 (GYDGKGQ), 183 to 186 (ESWV), glutamate 191, histidine 214, and 268 to 269 (NE). The 187-residue stretch at 112–298 (KKAIQSAGCE…QFEQHIRAVC (187 aa)) folds into the ATP-grasp domain.

The protein belongs to the PurK/PurT family. Homodimer.

The catalysed reaction is 5-amino-1-(5-phospho-beta-D-ribosyl)imidazole + hydrogencarbonate + ATP = 5-carboxyamino-1-(5-phospho-D-ribosyl)imidazole + ADP + phosphate + 2 H(+). Its pathway is purine metabolism; IMP biosynthesis via de novo pathway; 5-amino-1-(5-phospho-D-ribosyl)imidazole-4-carboxylate from 5-amino-1-(5-phospho-D-ribosyl)imidazole (N5-CAIR route): step 1/2. Functionally, catalyzes the ATP-dependent conversion of 5-aminoimidazole ribonucleotide (AIR) and HCO(3)(-) to N5-carboxyaminoimidazole ribonucleotide (N5-CAIR). The sequence is that of N5-carboxyaminoimidazole ribonucleotide synthase from Bacillus subtilis (strain 168).